A 473-amino-acid chain; its full sequence is Xylosidase/arabinosidase (473 aa).

Asp18 serves as the catalytic Proton acceptor. The active-site Proton donor is Glu209.

It belongs to the glycosyl hydrolase 43 family. In terms of assembly, homotetramer.

It carries out the reaction Hydrolysis of (1-&gt;4)-beta-D-xylans, to remove successive D-xylose residues from the non-reducing termini.. The catalysed reaction is Hydrolysis of terminal non-reducing alpha-L-arabinofuranoside residues in alpha-L-arabinosides.. The protein is Xylosidase/arabinosidase (xylA) of Thermoclostridium stercorarium (Clostridium stercorarium).